A 994-amino-acid polypeptide reads, in one-letter code: Translocase of chloroplast 108, chloroplastic (994 aa).

3 disordered regions span residues 14-61, 84-124, and 152-287; these read KEAS…EDEP, TTDL…DPSV, and AVDG…DETR. Composition is skewed to polar residues over residues 37 to 53 and 84 to 98; these read GETTVVTTSISEGANES and TTDLEKVSSTPTPSN. Positions 99 to 121 are enriched in basic and acidic residues; the sequence is AEKESPEATEVRIVEEGKLEKAD. Residues 166–197 show a composition bias toward acidic residues; sequence NDGDTDANTADEDNENDEDDVDEDEDEDDADM. Residues 249-268 show a composition bias toward polar residues; it reads ASDSPGRNTQRPNGALSTQI. The span at 269-280 shows a compositional bias: low complexity; that stretch reads TSTTDESASSDA. An AIG1-type G domain is found at 360–589; that stretch reads DFACTILVLG…KLQETTAPGR (230 aa). The tract at residues 369–376 is G1; it reads GKTGVGKS. Residue 372–377 coordinates GTP; that stretch reads GVGKSS. S376 contributes to the Mg(2+) binding site. A G2 region spans residues 395-399; it reads PSTNK. Residues 416–419 are G3; the sequence is DTPG. A G4 region spans residues 488–491; the sequence is THAS. Residues H489 and 537-538 contribute to the GTP site; that span reads EN. The G5 stretch occupies residues 537-539; it reads ENH. Disordered regions lie at residues 616–659 and 691–716; these read LPDE…EDLT and EAKKRQAQMSKEELAEAEEAEDEAGN. A compositionally biased stretch (acidic residues) spans 620–643; it reads QAGESDESDDDEEEEDSDADDYDE. The span at 650 to 659 shows a compositional bias: basic and acidic residues; it reads LSKEELEDLT. Positions 705–714 are enriched in acidic residues; sequence AEAEEAEDEA. A helical membrane pass occupies residues 969 to 989; sequence MVLIGIVPILRSLINCRFGFG.

The protein belongs to the TRAFAC class TrmE-Era-EngA-EngB-Septin-like GTPase superfamily. AIG1/Toc34/Toc159-like paraseptin GTPase family. TOC159 subfamily. In terms of assembly, part of the TOC core complex. It depends on Mg(2+) as a cofactor.

It localises to the plastid. The protein resides in the chloroplast outer membrane. GTPase involved in protein precursor import into chloroplasts. Seems to recognize chloroplast-destined precursor proteins and regulate their presentation to the translocation channel through GTP hydrolysis. Probably specialized in the import of nuclear encoded non-photosynthetic preproteins from the cytoplasm to the chloroplast. In Physcomitrium patens (Spreading-leaved earth moss), this protein is Translocase of chloroplast 108, chloroplastic.